The chain runs to 894 residues: DNA mismatch repair protein MutS (894 aa).

632–639 (GPNMGGKS) provides a ligand contact to ATP.

Belongs to the DNA mismatch repair MutS family.

Functionally, this protein is involved in the repair of mismatches in DNA. It is possible that it carries out the mismatch recognition step. This protein has a weak ATPase activity. This is DNA mismatch repair protein MutS from Paraburkholderia phytofirmans (strain DSM 17436 / LMG 22146 / PsJN) (Burkholderia phytofirmans).